A 189-amino-acid chain; its full sequence is MITTSVTEAAECLQQGQVLAYPTEAVWGLGCDPFNEQAFQKILELKQRPIEKGVILLAGHISQVEHLLTSLPQTTQQEIIDCWTNHQPSERATTWLLPADQHIPSWIKGEHPLVAVRVTTHPLCVALCNAFHGFIVSTSANPSGQEPAHSLQDACQYFGSQLNYLNGDLGQSQQPSRIINALTGEVIRP.

Positions 3–189 (TTSVTEAAEC…NALTGEVIRP (187 aa)) constitute a YrdC-like domain.

This sequence belongs to the SUA5 family. TsaC subfamily.

The protein resides in the cytoplasm. The catalysed reaction is L-threonine + hydrogencarbonate + ATP = L-threonylcarbamoyladenylate + diphosphate + H2O. Required for the formation of a threonylcarbamoyl group on adenosine at position 37 (t(6)A37) in tRNAs that read codons beginning with adenine. Catalyzes the conversion of L-threonine, HCO(3)(-)/CO(2) and ATP to give threonylcarbamoyl-AMP (TC-AMP) as the acyladenylate intermediate, with the release of diphosphate. The sequence is that of Threonylcarbamoyl-AMP synthase from Acinetobacter baumannii (strain ACICU).